The primary structure comprises 223 residues: AMSH-like ubiquitin thioesterase 2 (223 aa).

The MPN domain occupies 49 to 177 (VHISERLLED…YGIFKLTDPG (129 aa)). Zn(2+)-binding residues include H127, H129, D140, H142, C185, H191, and H193. The JAMM motif signature appears at 127-140 (HTHPSQGCFMSSVD).

The protein belongs to the peptidase M67C family. Requires Zn(2+) as cofactor.

Zinc metalloprotease that cleaves 'Lys-48'- and 'Lys-63'-linked polyubiquitin chains. In Arabidopsis thaliana (Mouse-ear cress), this protein is AMSH-like ubiquitin thioesterase 2 (AMSH2).